A 431-amino-acid chain; its full sequence is uncharacterized protein (431 aa).

A run of 4 helical transmembrane segments spans residues 228–248, 279–299, 349–369, and 388–408; these read GLLS…HYLS, IGLP…NFTF, ILWP…FLWI, and MIFN…LKLY.

It is found in the membrane. This is an uncharacterized protein from Saccharomyces cerevisiae (strain ATCC 204508 / S288c) (Baker's yeast).